We begin with the raw amino-acid sequence, 493 residues long: Lysine--tRNA ligase (493 aa).

Residues Glu-400 and Glu-407 each contribute to the Mg(2+) site.

It belongs to the class-II aminoacyl-tRNA synthetase family. As to quaternary structure, homodimer. The cofactor is Mg(2+).

It is found in the cytoplasm. It catalyses the reaction tRNA(Lys) + L-lysine + ATP = L-lysyl-tRNA(Lys) + AMP + diphosphate. The chain is Lysine--tRNA ligase from Syntrophomonas wolfei subsp. wolfei (strain DSM 2245B / Goettingen).